Reading from the N-terminus, the 226-residue chain is 2-C-methyl-D-erythritol 4-phosphate cytidylyltransferase (226 aa).

This sequence belongs to the IspD/TarI cytidylyltransferase family. IspD subfamily.

It carries out the reaction 2-C-methyl-D-erythritol 4-phosphate + CTP + H(+) = 4-CDP-2-C-methyl-D-erythritol + diphosphate. It functions in the pathway isoprenoid biosynthesis; isopentenyl diphosphate biosynthesis via DXP pathway; isopentenyl diphosphate from 1-deoxy-D-xylulose 5-phosphate: step 2/6. In terms of biological role, catalyzes the formation of 4-diphosphocytidyl-2-C-methyl-D-erythritol from CTP and 2-C-methyl-D-erythritol 4-phosphate (MEP). The sequence is that of 2-C-methyl-D-erythritol 4-phosphate cytidylyltransferase from Prochlorococcus marinus (strain MIT 9312).